Consider the following 351-residue polypeptide: MTDATPLLGRSLPELQDWVVAQGQPSYRAKQLYQWLYERSIHNLAEISVFPKAWRQSLQAVPVGRSQIVDRSVSPSGSIKYLLRLHDGEIIEAVGIPSGDRLTVCVSSQLGCAMACDFCATGKGGFRRHLAPHEIIDQVLTVQEDWQQRVSNIVFMGMGEPLLNLDAVLAAIRCLNQDIGIGQRGITVSTVGIPGHIRRLAETKRVGDRPLQFTLAVSLHAPNQAIRDRLIPSSRHYPITDLLQECRDYVQITGRRVTFEYILLAGLNDQPEQAEQLAQLLRGFQSHVNLIPCNPIDEVEYQRPSKARVDAFADALRQQRVAVTVRWSKGLGADAACGQLRANRSTATLPA.

Glu-92 acts as the Proton acceptor in catalysis. In terms of domain architecture, Radical SAM core spans 98 to 334; it reads SGDRLTVCVS…VRWSKGLGAD (237 aa). Cys-105 and Cys-337 are oxidised to a cystine. Cys-112, Cys-116, and Cys-119 together coordinate [4Fe-4S] cluster. S-adenosyl-L-methionine-binding positions include 159–160, Ser-189, 218–220, and Asn-294; these read GE and SLH. Cys-337 (S-methylcysteine intermediate) is an active-site residue.

It belongs to the radical SAM superfamily. RlmN family. It depends on [4Fe-4S] cluster as a cofactor.

It is found in the cytoplasm. It carries out the reaction adenosine(2503) in 23S rRNA + 2 reduced [2Fe-2S]-[ferredoxin] + 2 S-adenosyl-L-methionine = 2-methyladenosine(2503) in 23S rRNA + 5'-deoxyadenosine + L-methionine + 2 oxidized [2Fe-2S]-[ferredoxin] + S-adenosyl-L-homocysteine. The enzyme catalyses adenosine(37) in tRNA + 2 reduced [2Fe-2S]-[ferredoxin] + 2 S-adenosyl-L-methionine = 2-methyladenosine(37) in tRNA + 5'-deoxyadenosine + L-methionine + 2 oxidized [2Fe-2S]-[ferredoxin] + S-adenosyl-L-homocysteine. Functionally, specifically methylates position 2 of adenine 2503 in 23S rRNA and position 2 of adenine 37 in tRNAs. The chain is Probable dual-specificity RNA methyltransferase RlmN from Synechococcus sp. (strain ATCC 27144 / PCC 6301 / SAUG 1402/1) (Anacystis nidulans).